A 227-amino-acid polypeptide reads, in one-letter code: MPKGIIGKKIGMTRVFKDGKAIPVTVIQVEPNYVVNIRTEDKDGYSAVVLGTGEKKEKRTPKPMLAIFKKAGLKPLRHLAEFPLKEGEQPEPGQEVKVEDVFEKGDLVDVTGTSKGRGFASAMKRWDFSGFKKSHGSRYHRAVGSIGACSDPGRVWKTKRMAGHYGNETITVQGLEVVDIIPEKNIILVKGSVPGAPKSVVKLKESVIIHRRKGKRKLERAKAVYAS.

It belongs to the universal ribosomal protein uL3 family. Part of the 50S ribosomal subunit. Forms a cluster with proteins L14 and L19.

Its function is as follows. One of the primary rRNA binding proteins, it binds directly near the 3'-end of the 23S rRNA, where it nucleates assembly of the 50S subunit. This is Large ribosomal subunit protein uL3 from Persephonella marina (strain DSM 14350 / EX-H1).